Consider the following 294-residue polypeptide: 33 kDa chaperonin (294 aa).

2 cysteine pairs are disulfide-bonded: C239–C241 and C272–C275.

It belongs to the HSP33 family. Under oxidizing conditions two disulfide bonds are formed involving the reactive cysteines. Under reducing conditions zinc is bound to the reactive cysteines and the protein is inactive.

The protein resides in the cytoplasm. Redox regulated molecular chaperone. Protects both thermally unfolding and oxidatively damaged proteins from irreversible aggregation. Plays an important role in the bacterial defense system toward oxidative stress. This Lacticaseibacillus casei (strain BL23) (Lactobacillus casei) protein is 33 kDa chaperonin.